We begin with the raw amino-acid sequence, 369 residues long: MTSTLQTLAFKLAPPSREAGSGQLEPCSDVQGRRYEVVPSVVCSMCCLFGIIYCFFGYRCFKAVLFLTGLMFGSVIIFLLCYKERVLDTQLSVEASVGIGLGIGTLCGLVTMLVRSVGLFMVGLLLGLLVGIGTLIGMEELSSNPPRSVWVPLGVLLGLGMLFAVLTLQWQRCFTTLSTAVFGAAVIVVATDYFVELFALVRYIYERVKTGPREPVCWTTWVVLGAWPALALLGVLVQWRVTAEGYSHTKVMISRQQRRVQLMRIRQKEERRESSRKKKRKQPQSAQHTHAAKALHPEPAYRRKPNPIRRFDGDVLSPSYIQSFRDRQVDGRAYPVGGLMPSGHTSVDMDYDCGSTVPLTAGVGPHVRV.

7 helical membrane-spanning segments follow: residues 37–57 (VVPS…CFFG), 60–80 (CFKA…IFLL), 93–113 (VEAS…VTML), 117–137 (VGLF…TLIG), 148–168 (SVWV…VLTL), 181–201 (VFGA…FALV), and 216–236 (VCWT…LGVL). The interval 266 to 308 (RQKEERRESSRKKKRKQPQSAQHTHAAKALHPEPAYRRKPNPI) is disordered.

The protein belongs to the TMEM198 family.

The protein localises to the membrane. The chain is Transmembrane protein 198 (tmem198ab) from Danio rerio (Zebrafish).